We begin with the raw amino-acid sequence, 344 residues long: GLIPR1-like protein 2 (344 aa).

One can recognise an SCP domain in the interval 58-192 (VNLHNELRGD…IHAAIFICNY (135 aa)). A helical transmembrane segment spans residues 254–274 (TFILLLRILCFILCVITVLIV). Acidic residues-rich tracts occupy residues 292–304 (EESEAGNEEEEKE) and 312–334 (EMEMEIMEMEEEKEEREEEEEET). The interval 292 to 344 (EESEAGNEEEEKEEEKKEKEEMEMEIMEMEEEKEEREEEEEETQKEKMEEEEK) is disordered. Residues 335–344 (QKEKMEEEEK) show a composition bias toward basic and acidic residues.

Belongs to the CRISP family. In terms of tissue distribution, highly expressed in testis. Detected in prostate, kidney, bladder, lung and bone marrow.

It is found in the membrane. The protein is GLIPR1-like protein 2 (GLIPR1L2) of Homo sapiens (Human).